The following is a 1710-amino-acid chain: Chromodomain-helicase-DNA-binding protein 1 (1710 aa).

Positions 1–10 (MNGHSDEESV) are enriched in basic and acidic residues. The interval 1–252 (MNGHSDEESV…KEDEEMKTDS (252 aa)) is disordered. A compositionally biased stretch (low complexity) spans 35–63 (SSGSSSDGSSSQSGSSDSDSGSESGSQSE). Over residues 67–85 (DTSRENKVQAKPPKVDGAE) the composition is skewed to basic and acidic residues. Positions 105–121 (QQQQQQQQQHQASSNSG) are enriched in low complexity. A compositionally biased stretch (acidic residues) spans 122–136 (SEEDSSSSEDSDDSS). The span at 152 to 163 (SGSGSPSQSGSD) shows a compositional bias: low complexity. Over residues 187–210 (KVKSRKPQNRSKSKNGKKILGQKK) the composition is skewed to basic residues. Ser-215 and Ser-216 each carry phosphoserine. Positions 215–226 (SSEEDDDEEDYD) are enriched in acidic residues. Thr-237 carries the post-translational modification Phosphothreonine. At Ser-241 the chain carries Phosphoserine. Phosphothreonine is present on Thr-250. Ser-252 is modified (phosphoserine). Chromo domains are found at residues 272 to 364 (ETIE…RWLK) and 389 to 452 (QIVE…TPFK). Phosphoserine is present on Ser-471. One can recognise a Helicase ATP-binding domain in the interval 493–663 (AHSWCKGNSC…WSLLHFIMPE (171 aa)). 506 to 513 (DEMGLGKT) contributes to the ATP binding site. A DEAH box motif is present at residues 614-617 (DEAH). In terms of domain architecture, Helicase C-terminal spans 792 to 943 (LLDKLLIRLR…HLVIQRMDTT (152 aa)). A phosphoserine mark is found at Ser-1025, Ser-1040, Ser-1081, Ser-1085, Ser-1096, Ser-1098, Ser-1100, and Ser-1102. Residues 1080–1120 (ISFNGSEGRRSRSRRYSGSDSDSISEGKRPKKRGRPRTIPR) are disordered. Basic residues predominate over residues 1108–1117 (RPKKRGRPRT). Ser-1161 is subject to Phosphoserine. Disordered stretches follow at residues 1321-1408 (EALS…ESEE) and 1502-1710 (KKRQ…SRKT). A compositionally biased stretch (basic residues) spans 1329-1345 (SKRRKARAKKNKAMKSI). Phosphoserine is present on residues Ser-1353, Ser-1355, Ser-1356, Ser-1360, Ser-1363, Ser-1371, and Ser-1373. Positions 1370 to 1379 (LSESKSDGRE) are enriched in basic and acidic residues. A CHD1 helical C-terminal domain (CHCT) region spans residues 1409–1511 (LDQKTFSICK…KKRQESQQNS (103 aa)). Residues 1507–1516 (SQQNSDQNSN) show a composition bias toward low complexity. Basic and acidic residues-rich tracts occupy residues 1523–1573 (RNPD…DSRK) and 1582–1670 (GKDH…DHRA). The residue at position 1622 (Ser-1622) is a Phosphoserine. 3 repeat units span residues 1628–1632 (HSDHR), 1634–1638 (HSDHR), and 1640–1644 (HSDHR). A 3 X 5 AA repeats of H-S-D-H-R region spans residues 1628–1644 (HSDHRSHSDHRLHSDHR). Ser-1677, Arg-1688, and Ser-1689 each carry phosphoserine. The segment covering 1690 to 1701 (PFEHSVEHKSTP) has biased composition (basic and acidic residues).

The protein belongs to the SNF2/RAD54 helicase family. Component of the SAGA complex. Interacts with BCLAF1, NCoR, SRP20 and SAFB. Specifically interacts with methylated H3K4me2 and H3K4me3. Interacts with the FACT complex, the PAF complex and the U2 snRNP. Interacts directly with PAF1, SFA3A1, SFA3A2, SFA3A3, SNF2 and SSRP1. Expressed in many tissues including in the brain, where the highest level of expression is found in the cerebellum and basal ganglia.

Its subcellular location is the nucleus. The protein resides in the cytoplasm. It catalyses the reaction ATP + H2O = ADP + phosphate + H(+). ATP-dependent chromatin-remodeling factor which functions as substrate recognition component of the transcription regulatory histone acetylation (HAT) complex SAGA. Regulates polymerase II transcription. Also required for efficient transcription by RNA polymerase I, and more specifically the polymerase I transcription termination step. Regulates negatively DNA replication. Not only involved in transcription-related chromatin-remodeling, but also required to maintain a specific chromatin configuration across the genome. Is also associated with histone deacetylase (HDAC) activity. Required for the bridging of SNF2, the FACT complex, the PAF complex as well as the U2 snRNP complex to H3K4me3. Functions to modulate the efficiency of pre-mRNA splicing in part through physical bridging of spliceosomal components to H3K4me3. Required for maintaining open chromatin and pluripotency in embryonic stem cells. The polypeptide is Chromodomain-helicase-DNA-binding protein 1 (Homo sapiens (Human)).